Reading from the N-terminus, the 307-residue chain is tRNA dimethylallyltransferase (307 aa).

Residue 11-18 (GPTGSGKT) participates in ATP binding. 13-18 (TGSGKT) is a substrate binding site. The interaction with substrate tRNA stretch occupies residues 36 to 39 (DSVA).

The protein belongs to the IPP transferase family. In terms of assembly, monomer. It depends on Mg(2+) as a cofactor.

It catalyses the reaction adenosine(37) in tRNA + dimethylallyl diphosphate = N(6)-dimethylallyladenosine(37) in tRNA + diphosphate. In terms of biological role, catalyzes the transfer of a dimethylallyl group onto the adenine at position 37 in tRNAs that read codons beginning with uridine, leading to the formation of N6-(dimethylallyl)adenosine (i(6)A). In Koribacter versatilis (strain Ellin345), this protein is tRNA dimethylallyltransferase.